The chain runs to 426 residues: Glutamyl-tRNA reductase (426 aa).

Substrate contacts are provided by residues 49 to 52 (TCNR), S109, 114 to 116 (EGQ), and Q120. Catalysis depends on C50, which acts as the Nucleophile. NADP(+) is bound at residue 189–194 (GAGETG).

Belongs to the glutamyl-tRNA reductase family. As to quaternary structure, homodimer.

It carries out the reaction (S)-4-amino-5-oxopentanoate + tRNA(Glu) + NADP(+) = L-glutamyl-tRNA(Glu) + NADPH + H(+). The protein operates within porphyrin-containing compound metabolism; protoporphyrin-IX biosynthesis; 5-aminolevulinate from L-glutamyl-tRNA(Glu): step 1/2. It participates in porphyrin-containing compound metabolism; chlorophyll biosynthesis. Catalyzes the NADPH-dependent reduction of glutamyl-tRNA(Glu) to glutamate 1-semialdehyde (GSA). The chain is Glutamyl-tRNA reductase from Chlorobium chlorochromatii (strain CaD3).